A 262-amino-acid chain; its full sequence is Nodulation protein J (262 aa).

Residues 33 to 259 enclose the ABC transmembrane type-2 domain; sequence ASLLGHLAEP…FLSTALLRRR (227 aa). The next 6 membrane-spanning stretches (helical) occupy residues 35–55, 60–80, 125–145, 148–168, 177–197, and 231–251; these read LLGH…GLGV, VGGV…SAMT, AALA…TQWL, LYAL…GMVV, YFIF…GAVF, and VVDV…PFFL.

The protein belongs to the ABC-2 integral membrane protein family. Lipooligosaccharide exporter (TC 3.A.1.102) subfamily. In terms of assembly, the complex is composed of two ATP-binding proteins (NodI) and two transmembrane proteins (NodJ).

It is found in the cell inner membrane. Part of the ABC transporter complex NodIJ involved in the export of the nodulation factors (Nod factors), the bacterial signal molecules that induce symbiosis and subsequent nodulation induction. Nod factors are LCO (lipo-chitin oligosaccharide), a modified beta-1,4-linked N-acetylglucosamine oligosaccharide. This subunit encodes the transporter. The polypeptide is Nodulation protein J (nodJ) (Rhizobium leguminosarum bv. trifolii).